Consider the following 476-residue polypeptide: Glycogen synthase (476 aa).

ADP-alpha-D-glucose is bound at residue Lys-15.

This sequence belongs to the glycosyltransferase 1 family. Bacterial/plant glycogen synthase subfamily.

It catalyses the reaction [(1-&gt;4)-alpha-D-glucosyl](n) + ADP-alpha-D-glucose = [(1-&gt;4)-alpha-D-glucosyl](n+1) + ADP + H(+). It participates in glycan biosynthesis; glycogen biosynthesis. Functionally, synthesizes alpha-1,4-glucan chains using ADP-glucose. This Ligilactobacillus salivarius (strain UCC118) (Lactobacillus salivarius) protein is Glycogen synthase.